Here is a 374-residue protein sequence, read N- to C-terminus: uncharacterized protein (374 aa).

Residues 1-46 are disordered; it reads MVNEEEKDLTAEGDSNNTGVSPDSIKNKTLDFYPKEKTTERKTRSR. Basic and acidic residues predominate over residues 25–46; sequence IKNKTLDFYPKEKTTERKTRSR. Helical transmembrane passes span 70–90, 127–147, 153–173, 199–219, 242–262, and 312–332; these read YAYI…FIAA, WVFY…KIGI, TIVY…IPVI, IWLF…YGLV, ISIA…MLAI, and YFFG…AITI.

The protein to M.genitalium MG432 and MG443.

The protein localises to the cell membrane. This is an uncharacterized protein from Spiroplasma citri.